Here is a 181-residue protein sequence, read N- to C-terminus: RING-H2 finger protein ATL72 (181 aa).

Residues 34 to 54 traverse the membrane as a helical segment; it reads VIILAALLCALICALSLNSAL. The RING-type; atypical zinc-finger motif lies at 114 to 156; it reads CLICLGDFEDGEKVRVLPKCNHGFHVRCIDTWLLSRSSCPTCR.

The protein belongs to the RING-type zinc finger family. ATL subfamily.

It localises to the membrane. The catalysed reaction is S-ubiquitinyl-[E2 ubiquitin-conjugating enzyme]-L-cysteine + [acceptor protein]-L-lysine = [E2 ubiquitin-conjugating enzyme]-L-cysteine + N(6)-ubiquitinyl-[acceptor protein]-L-lysine.. The protein operates within protein modification; protein ubiquitination. In Arabidopsis thaliana (Mouse-ear cress), this protein is RING-H2 finger protein ATL72 (ATL72).